A 276-amino-acid polypeptide reads, in one-letter code: Diaminopimelate epimerase (276 aa).

Residues Asn13, Gln46, and Asn66 each contribute to the substrate site. Residue Cys75 is the Proton donor of the active site. Substrate-binding positions include 76–77 (GN), Asn159, Asn192, and 210–211 (ER). The active-site Proton acceptor is the Cys219. A substrate-binding site is contributed by 220-221 (GT).

It belongs to the diaminopimelate epimerase family. Homodimer.

The protein localises to the cytoplasm. It carries out the reaction (2S,6S)-2,6-diaminopimelate = meso-2,6-diaminopimelate. It participates in amino-acid biosynthesis; L-lysine biosynthesis via DAP pathway; DL-2,6-diaminopimelate from LL-2,6-diaminopimelate: step 1/1. Its function is as follows. Catalyzes the stereoinversion of LL-2,6-diaminopimelate (L,L-DAP) to meso-diaminopimelate (meso-DAP), a precursor of L-lysine and an essential component of the bacterial peptidoglycan. The sequence is that of Diaminopimelate epimerase from Aeromonas hydrophila subsp. hydrophila (strain ATCC 7966 / DSM 30187 / BCRC 13018 / CCUG 14551 / JCM 1027 / KCTC 2358 / NCIMB 9240 / NCTC 8049).